A 422-amino-acid chain; its full sequence is Glutamyl-tRNA reductase (422 aa).

Substrate contacts are provided by residues 49-52, S107, 112-114, and Q118; these read TCNR and EPQ. Residue C50 is the Nucleophile of the active site. 187–192 is an NADP(+) binding site; the sequence is GAGETI.

The protein belongs to the glutamyl-tRNA reductase family. Homodimer.

It catalyses the reaction (S)-4-amino-5-oxopentanoate + tRNA(Glu) + NADP(+) = L-glutamyl-tRNA(Glu) + NADPH + H(+). Its pathway is porphyrin-containing compound metabolism; protoporphyrin-IX biosynthesis; 5-aminolevulinate from L-glutamyl-tRNA(Glu): step 1/2. Functionally, catalyzes the NADPH-dependent reduction of glutamyl-tRNA(Glu) to glutamate 1-semialdehyde (GSA). The sequence is that of Glutamyl-tRNA reductase from Stutzerimonas stutzeri (strain A1501) (Pseudomonas stutzeri).